We begin with the raw amino-acid sequence, 690 residues long: Eukaryotic translation initiation factor 3 subunit B (690 aa).

Positions 1–11 are enriched in basic and acidic residues; sequence MAKKKSEEHSG. The tract at residues 1–36 is disordered; the sequence is MAKKKSEEHSGADANDSDYTEEPNFDDPPNFVDNIS. A compositionally biased stretch (acidic residues) spans 15-25; that stretch reads NDSDYTEEPNF. Positions 57-141 constitute an RRM domain; the sequence is SVVVVDNMPK…YTFAVNLFTD (85 aa). 5 WD repeats span residues 207 to 246, 292 to 331, 334 to 369, 442 to 484, and 530 to 575; these read TRER…KIQK, GDGM…LLDL, IKIP…TLME, EIRE…KPSL, and PDHF…IRRT. The stretch at 614–645 forms a coiled coil; that stretch reads QKDRLRLTRASKELLEKRSQLRETFMEYRNKR.

This sequence belongs to the eIF-3 subunit B family. Component of the eukaryotic translation initiation factor 3 (eIF-3) complex. The eIF-3 complex interacts with pix. Interacts with mxt.

Its subcellular location is the cytoplasm. In terms of biological role, RNA-binding component of the eukaryotic translation initiation factor 3 (eIF-3) complex, which is involved in protein synthesis of a specialized repertoire of mRNAs and, together with other initiation factors, stimulates binding of mRNA and methionyl-tRNAi to the 40S ribosome. The eIF-3 complex specifically targets and initiates translation of a subset of mRNAs involved in cell proliferation. This chain is Eukaryotic translation initiation factor 3 subunit B, found in Drosophila virilis (Fruit fly).